The chain runs to 99 residues: Large ribosomal subunit protein uL23 (99 aa).

This sequence belongs to the universal ribosomal protein uL23 family. In terms of assembly, part of the 50S ribosomal subunit. Contacts protein L29, and trigger factor when it is bound to the ribosome.

In terms of biological role, one of the early assembly proteins it binds 23S rRNA. One of the proteins that surrounds the polypeptide exit tunnel on the outside of the ribosome. Forms the main docking site for trigger factor binding to the ribosome. In Xanthomonas campestris pv. campestris (strain B100), this protein is Large ribosomal subunit protein uL23.